The sequence spans 303 residues: Protoheme IX farnesyltransferase (303 aa).

9 helical membrane passes run 17–37 (GVVMLLMVTAVAGMFLATEPA), 42–62 (LATFIPAFVGLSLAMMASAAI), 91–111 (AAITFAVLLATASMIMLYFLV), 114–134 (LTAWLTLFGFVGYAFIYTLYL), 142–162 (IVIGGIAGAIPPLLGWTAVTG), 168–188 (AWLLVLIIFVWTPPHFWALAI), 208–228 (IPFTRESVLYYTILLFICTLL), 231–251 (LTGMSDLIYLLSALILGLVFL), and 270–290 (FGYSITYLFALFTALLVDHYL).

The protein belongs to the UbiA prenyltransferase family. Protoheme IX farnesyltransferase subfamily.

The protein localises to the cell inner membrane. It catalyses the reaction heme b + (2E,6E)-farnesyl diphosphate + H2O = Fe(II)-heme o + diphosphate. It participates in porphyrin-containing compound metabolism; heme O biosynthesis; heme O from protoheme: step 1/1. In terms of biological role, converts heme B (protoheme IX) to heme O by substitution of the vinyl group on carbon 2 of heme B porphyrin ring with a hydroxyethyl farnesyl side group. The chain is Protoheme IX farnesyltransferase from Alcanivorax borkumensis (strain ATCC 700651 / DSM 11573 / NCIMB 13689 / SK2).